Consider the following 953-residue polypeptide: Lysosomal alpha-glucosidase (953 aa).

The first 27 residues, 1–27 (MNIRKPLCSNSVVGACTLISLTTAVIL), serve as a signal peptide directing secretion. A propeptide spanning residues 28 to 69 (GHLMLRELMLLPQDLHESSSGLWKTYRPHHQEGYKPGPLHIQ) is cleaved from the precursor. In terms of domain architecture, P-type spans 80 to 131 (TQCDVPPSSRFDCAPDKGISQEQCEARGCCYVPAGQVLKEPQIGQPWCFFPP). 3 disulfide bridges follow: cysteine 82–cysteine 109, cysteine 92–cysteine 108, and cysteine 103–cysteine 127. Residues asparagine 140, asparagine 233, and asparagine 390 are each glycosylated (N-linked (GlcNAc...) asparagine). Residue aspartate 404 participates in substrate binding. A glycan (N-linked (GlcNAc...) asparagine) is linked at asparagine 470. Aspartate 518 serves as the catalytic Nucleophile. Glutamate 521 is a catalytic residue. Cysteine 533 and cysteine 558 are joined by a disulfide. Substrate contacts are provided by arginine 600 and aspartate 616. A disulfide bridge connects residues cysteine 647 and cysteine 658. Histidine 674 lines the substrate pocket. N-linked (GlcNAc...) asparagine glycans are attached at residues asparagine 883, asparagine 926, and asparagine 933.

This sequence belongs to the glycosyl hydrolase 31 family.

It is found in the lysosome. The protein localises to the lysosome membrane. The catalysed reaction is Hydrolysis of terminal, non-reducing (1-&gt;4)-linked alpha-D-glucose residues with release of alpha-D-glucose.. In terms of biological role, essential for the degradation of glycogen in lysosomes. Has highest activity on alpha-1,4-linked glycosidic linkages, but can also hydrolyze alpha-1,6-linked glucans. This is Lysosomal alpha-glucosidase (Gaa) from Mus musculus (Mouse).